Reading from the N-terminus, the 182-residue chain is Inner membrane assembly complex subunit 17 (182 aa).

The transit peptide at 1-45 (MLKRRSNALITLSRTKLFPITTVAYYHRRLLNQQRRAVSTSPKKE) directs the protein to the mitochondrion. The Mitochondrial matrix portion of the chain corresponds to 46-107 (IKSLEDLANL…EIPVKRFIRP (62 aa)). The chain crosses the membrane as a helical span at residues 108-127 (LWMFILMGSSVYLLLHFSWW). Residues 128 to 158 (KLEHEERESQLKKEVEILEHQLNELIVQDKT) adopt a coiled-coil conformation. At 128–182 (KLEHEERESQLKKEVEILEHQLNELIVQDKTHNTSRGKGSNESTHMKPWYRRWFW) the chain is on the mitochondrial intermembrane side.

It belongs to the INA17 family. As to quaternary structure, component of the inner membrane assembly (INA) complex, composed of INA17 and INA22. Interacts with a subset of F(1)F(0)-ATP synthase subunits of the F(1)-domain and the peripheral stalk.

Its subcellular location is the mitochondrion inner membrane. Component of the INA complex (INAC) that promotes the biogenesis of mitochondrial F(1)F(0)-ATP synthase. INAC facilitates the assembly of the peripheral stalk and promotes the assembly of the catalytic F(1)-domain with the membrane-embedded F(0)-domain. The polypeptide is Inner membrane assembly complex subunit 17 (Saccharomyces cerevisiae (strain RM11-1a) (Baker's yeast)).